The primary structure comprises 302 residues: CRISPR-associated endonuclease Cas1 1 (302 aa).

Positions 159, 219, and 234 each coordinate Mn(2+).

Belongs to the CRISPR-associated endonuclease Cas1 family. As to quaternary structure, homodimer, forms a heterotetramer with a Cas2 homodimer. Requires Mg(2+) as cofactor. Mn(2+) serves as cofactor.

In terms of biological role, CRISPR (clustered regularly interspaced short palindromic repeat), is an adaptive immune system that provides protection against mobile genetic elements (viruses, transposable elements and conjugative plasmids). CRISPR clusters contain spacers, sequences complementary to antecedent mobile elements, and target invading nucleic acids. CRISPR clusters are transcribed and processed into CRISPR RNA (crRNA). Acts as a dsDNA endonuclease. Involved in the integration of spacer DNA into the CRISPR cassette. In Pyrobaculum aerophilum (strain ATCC 51768 / DSM 7523 / JCM 9630 / CIP 104966 / NBRC 100827 / IM2), this protein is CRISPR-associated endonuclease Cas1 1.